The chain runs to 785 residues: 1-phosphatidylinositol 4,5-bisphosphate phosphodiesterase delta-3 (785 aa).

The tract at residues 1–43 is disordered; that stretch reads MLCGGWKRSRRSPEESRVSAQVAAPLAFPPSPASSDSSTKRPG. Residues 65 to 168 enclose the PH domain; sequence SRLLKIRSRT…WVRGLAKLRA (104 aa). Positions 69 to 97 are substrate binding; that stretch reads KIRSRTWHKERLYRLQEDGLSVWFQRRIP. The residue at position 101 (Ser-101) is a Phosphoserine. 3 consecutive EF-hand domains span residues 178-213, 214-249, and 246-281; these read RLDHWIHSYLHRADSDQDSKMSFKEIKSLLRMVNVD, MNDMYAYRLFKECDHSNNERLEGAEIEAFLRRLLKR, and LLKRPELEEIFRRYSGEDRVLSASELLEFLEDQGED. 10 residues coordinate Ca(2+): Asp-191, Asp-193, Asp-195, Lys-197, Glu-202, Asp-227, Ser-229, Asn-231, Arg-233, and Glu-238. Positions 333–478 constitute a PI-PLC X-box domain; sequence QDMGQPLAHY…LKGRILVKGK (146 aa). His-348 is a catalytic residue. Residues Asn-349, Glu-378, and Asp-380 each contribute to the Ca(2+) site. The active site involves His-393. Glu-427 is a binding site for Ca(2+). The substrate site is built by Lys-476 and Lys-478. Residues 484-493 show a composition bias toward basic and acidic residues; that stretch reads RSEDGRILSD. Residues 484 to 517 form a disordered region; that stretch reads RSEDGRILSDREEEEEEEEEAEEALEAAEQRSRA. Ser-492 bears the Phosphoserine mark. The segment covering 494 to 509 has biased composition (acidic residues); the sequence is REEEEEEEEEAEEALE. The PI-PLC Y-box domain occupies 524 to 640; it reads LSALAVYCCA…GYVLKPAYLR (117 aa). Ser-553 lines the substrate pocket. Ser-569 bears the Phosphoserine mark. Arg-580 is a substrate binding site. The C2 domain occupies 636–765; sequence PAYLRQLNTT…QGYRHIHLLS (130 aa). Ca(2+) is bound by residues Ile-679, Asp-681, Asn-705, Asp-734, Tyr-735, and Asp-736.

Requires Ca(2+) as cofactor. As to expression, expressed in cerebellum and cerebral cortex.

Its subcellular location is the membrane. It is found in the cytoplasm. It localises to the cleavage furrow. It carries out the reaction a 1,2-diacyl-sn-glycero-3-phospho-(1D-myo-inositol-4,5-bisphosphate) + H2O = 1D-myo-inositol 1,4,5-trisphosphate + a 1,2-diacyl-sn-glycerol + H(+). With respect to regulation, strongly activated by phosphatidic acid. Inhibited by phosphatidylethanolamine (PtdEtn), phosphatidylcholine (PtdCho), sphingomyelin and phosphatidylserine (PtdSer). In terms of biological role, hydrolyzes the phosphatidylinositol 4,5-bisphosphate (PIP2) to generate 2 second messenger molecules diacylglycerol (DAG) and inositol 1,4,5-trisphosphate (IP3). DAG mediates the activation of protein kinase C (PKC), while IP3 releases Ca(2+) from intracellular stores. Essential for trophoblast and placental development. May participate in cytokinesis by hydrolyzing PIP2 at the cleavage furrow. Regulates neurite outgrowth through the inhibition of RhoA/Rho kinase signaling. The polypeptide is 1-phosphatidylinositol 4,5-bisphosphate phosphodiesterase delta-3 (Mus musculus (Mouse)).